The sequence spans 187 residues: Early E3 20.6 kDa glycoprotein (187 aa).

Asn-30, Asn-73, Asn-117, Asn-134, and Asn-135 each carry an N-linked (GlcNAc...) asparagine; by host glycan.

This sequence belongs to the adenoviridae E3_20 family.

This chain is Early E3 20.6 kDa glycoprotein, found in Human adenovirus B serotype 35 (HAdV-35).